The chain runs to 273 residues: Neuferricin (273 aa).

A signal peptide spans 1-22 (MLGYLAAAALCLAAVLLMRLDH). Positions 44 to 143 (GRLMSKEELS…QNYITIGKLT (100 aa)) constitute a Cytochrome b5 heme-binding domain.

The protein belongs to the cytochrome b5 family. MAPR subfamily.

It localises to the secreted. Heme-binding protein which promotes neuronal but not astrocyte differentiation. The sequence is that of Neuferricin (cyb5d2) from Xenopus tropicalis (Western clawed frog).